A 430-amino-acid polypeptide reads, in one-letter code: tRNA(Ile)-lysidine synthase (430 aa).

Residue 24–29 (SGGLDS) coordinates ATP.

This sequence belongs to the tRNA(Ile)-lysidine synthase family.

It is found in the cytoplasm. It catalyses the reaction cytidine(34) in tRNA(Ile2) + L-lysine + ATP = lysidine(34) in tRNA(Ile2) + AMP + diphosphate + H(+). Functionally, ligates lysine onto the cytidine present at position 34 of the AUA codon-specific tRNA(Ile) that contains the anticodon CAU, in an ATP-dependent manner. Cytidine is converted to lysidine, thus changing the amino acid specificity of the tRNA from methionine to isoleucine. This is tRNA(Ile)-lysidine synthase from Haemophilus influenzae (strain ATCC 51907 / DSM 11121 / KW20 / Rd).